The primary structure comprises 82 residues: Small ribosomal subunit protein bS16 (82 aa).

The protein belongs to the bacterial ribosomal protein bS16 family.

This Dehalococcoides mccartyi (strain ATCC BAA-2266 / KCTC 15142 / 195) (Dehalococcoides ethenogenes (strain 195)) protein is Small ribosomal subunit protein bS16.